A 288-amino-acid chain; its full sequence is Bifunctional protein FolD (288 aa).

NADP(+) is bound by residues 166 to 168 (GAS) and Ile232.

It belongs to the tetrahydrofolate dehydrogenase/cyclohydrolase family. In terms of assembly, homodimer.

The enzyme catalyses (6R)-5,10-methylene-5,6,7,8-tetrahydrofolate + NADP(+) = (6R)-5,10-methenyltetrahydrofolate + NADPH. It catalyses the reaction (6R)-5,10-methenyltetrahydrofolate + H2O = (6R)-10-formyltetrahydrofolate + H(+). The protein operates within one-carbon metabolism; tetrahydrofolate interconversion. Its function is as follows. Catalyzes the oxidation of 5,10-methylenetetrahydrofolate to 5,10-methenyltetrahydrofolate and then the hydrolysis of 5,10-methenyltetrahydrofolate to 10-formyltetrahydrofolate. In Klebsiella pneumoniae (strain 342), this protein is Bifunctional protein FolD.